The chain runs to 154 residues: Large ribosomal subunit protein bL9c (154 aa).

This sequence belongs to the bacterial ribosomal protein bL9 family.

Its subcellular location is the plastid. The protein resides in the chloroplast. Functionally, binds to the 23S rRNA. This is Large ribosomal subunit protein bL9c from Gracilaria tenuistipitata var. liui (Red alga).